The following is a 180-amino-acid chain: Cytidylate kinase (180 aa).

7–15 serves as a coordination point for ATP; sequence GLPGSGTST.

Belongs to the cytidylate kinase family. Type 2 subfamily.

The protein localises to the cytoplasm. The catalysed reaction is CMP + ATP = CDP + ADP. It carries out the reaction dCMP + ATP = dCDP + ADP. The protein is Cytidylate kinase (cmk) of Methanosarcina mazei (strain ATCC BAA-159 / DSM 3647 / Goe1 / Go1 / JCM 11833 / OCM 88) (Methanosarcina frisia).